The primary structure comprises 219 residues: Large ribosomal subunit protein uL3 (219 aa).

Residues 136–156 (GASHGAHRNHRKPGSIGGCAT) form a disordered region.

Belongs to the universal ribosomal protein uL3 family. In terms of assembly, part of the 50S ribosomal subunit. Forms a cluster with proteins L14 and L19.

Functionally, one of the primary rRNA binding proteins, it binds directly near the 3'-end of the 23S rRNA, where it nucleates assembly of the 50S subunit. This chain is Large ribosomal subunit protein uL3, found in Kineococcus radiotolerans (strain ATCC BAA-149 / DSM 14245 / SRS30216).